Consider the following 248-residue polypeptide: Tropomyosin alpha-4 chain (248 aa).

At A2 the chain carries N-acetylalanine. A coiled-coil region spans residues 2–248 (AGLNSLEAVK…DQTLNELNCI (247 aa)). S6 is modified (phosphoserine). Residues 15–47 (QALQQQADEAEDRAQGLQRELDGERERREKAEG) are disordered. Residues 33 to 47 (RELDGERERREKAEG) are compositionally biased toward basic and acidic residues. Residues K177 and K215 each carry the N6-acetyllysine modification. T216 bears the Phosphothreonine mark.

Belongs to the tropomyosin family. Homodimer. Heterodimer of an alpha (TPM1, TPM3 or TPM4) and a beta (TPM2) chain. In terms of tissue distribution, detected in cardiac tissue and platelets, the form found in cardiac tissue is a higher molecular weight than the form found in platelets. Expressed at higher levels in the platelets of hypertensive patients with cardiac hypertrophy than in the platelets of hypertensive patients without cardiac hypertrophy (at protein level).

The protein resides in the cytoplasm. It localises to the cytoskeleton. Its function is as follows. Binds to actin filaments in muscle and non-muscle cells. Plays a central role, in association with the troponin complex, in the calcium dependent regulation of vertebrate striated muscle contraction. Smooth muscle contraction is regulated by interaction with caldesmon. In non-muscle cells is implicated in stabilizing cytoskeleton actin filaments. Binds calcium. Plays a role in platelet biogenesis. The protein is Tropomyosin alpha-4 chain (TPM4) of Homo sapiens (Human).